We begin with the raw amino-acid sequence, 243 residues long: UPF0502 protein H16_B1091 (243 aa).

A disordered region spans residues 1 to 23; the sequence is MQSNHDSDASQAGDRPARPALRP.

The protein belongs to the UPF0502 family.

The sequence is that of UPF0502 protein H16_B1091 from Cupriavidus necator (strain ATCC 17699 / DSM 428 / KCTC 22496 / NCIMB 10442 / H16 / Stanier 337) (Ralstonia eutropha).